We begin with the raw amino-acid sequence, 486 residues long: Cysteine--tRNA ligase (486 aa).

Residue C27 coordinates Zn(2+). Positions 29–39 match the 'HIGH' region motif; that stretch reads PTTYNFIHLGN. 3 residues coordinate Zn(2+): C207, H232, and E236. A 'KMSKS' region motif is present at residues 264–268; that stretch reads KMSKS. Position 267 (K267) interacts with ATP.

It belongs to the class-I aminoacyl-tRNA synthetase family. In terms of assembly, monomer. Requires Zn(2+) as cofactor.

It is found in the cytoplasm. It carries out the reaction tRNA(Cys) + L-cysteine + ATP = L-cysteinyl-tRNA(Cys) + AMP + diphosphate. In Desulforamulus reducens (strain ATCC BAA-1160 / DSM 100696 / MI-1) (Desulfotomaculum reducens), this protein is Cysteine--tRNA ligase.